The sequence spans 98 residues: MKRLLIVLIALLAMLEYRLWFGDKSLAESFHLQEQIKLQQQSNAQLVARNQILREEISDLRSGTEALEERARNELGMVKEGETFFRVVGGERDKPSND.

At 1–3 (MKR) the chain is on the cytoplasmic side. Residues 4–21 (LLIVLIALLAMLEYRLWF) traverse the membrane as a helical segment. The Periplasmic portion of the chain corresponds to 22–98 (GDKSLAESFH…GGERDKPSND (77 aa)). Residues 31–74 (HLQEQIKLQQQSNAQLVARNQILREEISDLRSGTEALEERARNE) are a coiled coil.

This sequence belongs to the FtsB family. As to quaternary structure, part of a complex composed of FtsB, FtsL and FtsQ.

It localises to the cell inner membrane. Functionally, essential cell division protein. May link together the upstream cell division proteins, which are predominantly cytoplasmic, with the downstream cell division proteins, which are predominantly periplasmic. In Shewanella halifaxensis (strain HAW-EB4), this protein is Cell division protein FtsB.